Consider the following 338-residue polypeptide: Ribonucleoside-diphosphate reductase small subunit (338 aa).

The Fe cation site is built by Asp81, Glu112, and His115. Residue Tyr119 is part of the active site. 3 residues coordinate Fe cation: Glu174, Glu208, and His211.

Belongs to the ribonucleoside diphosphate reductase small chain family. Heterodimer of a large and a small subunit. The cofactor is Fe cation.

The protein localises to the cytoplasm. The enzyme catalyses a 2'-deoxyribonucleoside 5'-diphosphate + [thioredoxin]-disulfide + H2O = a ribonucleoside 5'-diphosphate + [thioredoxin]-dithiol. Provides the precursors necessary for DNA synthesis. Catalyzes the biosynthesis of deoxyribonucleotides from the corresponding ribonucleotides. This is Ribonucleoside-diphosphate reductase small subunit (rnrB-1) from Dictyostelium discoideum (Social amoeba).